The primary structure comprises 63 residues: Large ribosomal subunit protein uL30 (63 aa).

The protein belongs to the universal ribosomal protein uL30 family. Part of the 50S ribosomal subunit.

In Methylobacterium sp. (strain 4-46), this protein is Large ribosomal subunit protein uL30.